The following is a 446-amino-acid chain: Exodeoxyribonuclease 7 large subunit (446 aa).

It belongs to the XseA family. As to quaternary structure, heterooligomer composed of large and small subunits.

The protein localises to the cytoplasm. It catalyses the reaction Exonucleolytic cleavage in either 5'- to 3'- or 3'- to 5'-direction to yield nucleoside 5'-phosphates.. Bidirectionally degrades single-stranded DNA into large acid-insoluble oligonucleotides, which are then degraded further into small acid-soluble oligonucleotides. The protein is Exodeoxyribonuclease 7 large subunit of Geotalea uraniireducens (strain Rf4) (Geobacter uraniireducens).